A 143-amino-acid chain; its full sequence is Large ribosomal subunit protein uL13 (143 aa).

Belongs to the universal ribosomal protein uL13 family. In terms of assembly, part of the 50S ribosomal subunit.

Functionally, this protein is one of the early assembly proteins of the 50S ribosomal subunit, although it is not seen to bind rRNA by itself. It is important during the early stages of 50S assembly. This Geobacter sulfurreducens (strain ATCC 51573 / DSM 12127 / PCA) protein is Large ribosomal subunit protein uL13.